The primary structure comprises 117 residues: cAMP-regulated phosphoprotein 19-A (117 aa).

Positions 1 to 37 (MSGENQETKAQEESSALEQKEIDDKVVSPEKSEEIKL) are enriched in basic and acidic residues. Positions 1–54 (MSGENQETKAQEESSALEQKEIDDKVVSPEKSEEIKLKARYPNLGPKPGGSDFL) are disordered. Ser-28 is modified (phosphoserine; by CDK2). Ser-67 carries the phosphoserine; by GWL modification. Residues 78–117 (KNKQLPTAASDKTEVTGDHIPTPQDLPQRKPSLVASKLAG) form a disordered region. Residue Thr-99 is modified to Phosphothreonine; by CDK2. Position 109 is a phosphoserine; by PKA (Ser-109).

The protein belongs to the endosulfine family. Interacts (when phosphorylated at Ser-67) with ppp2r2d. Phosphorylation at Ser-67 by gwl during mitosis is essential for interaction with ppp2r2d (PR55-delta) and subsequent inactivation of PP2A. Phosphorylated by PKA.

It localises to the cytoplasm. Functionally, protein phosphatase inhibitor that specifically inhibits protein phosphatase 2A (PP2A) during mitosis. When phosphorylated at Ser-67 during mitosis, specifically interacts with ppp2r2d (PR55-delta) and inhibits its activity, leading to inactivation of PP2A, an essential condition to keep cyclin-B1-CDK1 activity high during M phase. The protein is cAMP-regulated phosphoprotein 19-A (arpp19-a) of Xenopus laevis (African clawed frog).